The sequence spans 379 residues: Flap endonuclease 1 (379 aa).

The tract at residues M1–R105 is N-domain. Mg(2+) is bound at residue D34. R71 is a binding site for DNA. Positions 87, 159, 161, 180, and 182 each coordinate Mg(2+). An I-domain region spans residues A123–H254. E159 contributes to the DNA binding site. The DNA site is built by G232 and D234. Residue D234 participates in Mg(2+) binding. Residues A331–K379 are disordered. Positions S336–F344 are interaction with PCNA. The segment covering K355–S364 has biased composition (basic and acidic residues). Residues A368–K379 are compositionally biased toward basic residues.

This sequence belongs to the XPG/RAD2 endonuclease family. FEN1 subfamily. In terms of assembly, interacts with PCNA. Three molecules of FEN1 bind to one PCNA trimer with each molecule binding to one PCNA monomer. PCNA stimulates the nuclease activity without altering cleavage specificity. Requires Mg(2+) as cofactor. In terms of processing, phosphorylated. Phosphorylation upon DNA damage induces relocalization to the nuclear plasma.

It is found in the nucleus. The protein localises to the nucleolus. The protein resides in the nucleoplasm. It localises to the mitochondrion. Its function is as follows. Structure-specific nuclease with 5'-flap endonuclease and 5'-3' exonuclease activities involved in DNA replication and repair. During DNA replication, cleaves the 5'-overhanging flap structure that is generated by displacement synthesis when DNA polymerase encounters the 5'-end of a downstream Okazaki fragment. It enters the flap from the 5'-end and then tracks to cleave the flap base, leaving a nick for ligation. Also involved in the long patch base excision repair (LP-BER) pathway, by cleaving within the apurinic/apyrimidinic (AP) site-terminated flap. Acts as a genome stabilization factor that prevents flaps from equilibrating into structures that lead to duplications and deletions. Also possesses 5'-3' exonuclease activity on nicked or gapped double-stranded DNA, and exhibits RNase H activity. Also involved in replication and repair of rDNA and in repairing mitochondrial DNA. The polypeptide is Flap endonuclease 1 (Zea mays (Maize)).